The sequence spans 462 residues: Citrate synthase, mitochondrial (462 aa).

A mitochondrion-targeting transit peptide spans M1 to F21. Active-site residues include H300, H346, and D401.

The protein belongs to the citrate synthase family. Homodimer.

Its subcellular location is the mitochondrion matrix. The protein resides in the cytoplasm. It localises to the cytoskeleton. It carries out the reaction oxaloacetate + acetyl-CoA + H2O = citrate + CoA + H(+). Its pathway is carbohydrate metabolism; tricarboxylic acid cycle; isocitrate from oxaloacetate: step 1/2. Its function is as follows. Structural protein involved in oral morphogenesis and in pronuclear behavior during conjugation. Respiratory enzyme. The chain is Citrate synthase, mitochondrial from Tetrahymena thermophila.